Reading from the N-terminus, the 586-residue chain is Phosphomethylpyrimidine synthase (586 aa).

The tract at residues 1 to 58 is disordered; that stretch reads MKQSVSAEQIELKSSLPGSKKVYVDGPREGMKVPMREIEQSDTNGVPNPPIRVYDTSG. A compositionally biased stretch (basic and acidic residues) spans 22-39; that stretch reads VYVDGPREGMKVPMREIE. Substrate-binding positions include N193, M222, Y251, H287, 307-309, 348-351, and E387; these read SRG and DGLR. H391 serves as a coordination point for Zn(2+). Y414 is a binding site for substrate. Residue H455 coordinates Zn(2+). [4Fe-4S] cluster is bound by residues C535, C538, and C543.

This sequence belongs to the ThiC family. [4Fe-4S] cluster serves as cofactor.

The catalysed reaction is 5-amino-1-(5-phospho-beta-D-ribosyl)imidazole + S-adenosyl-L-methionine = 4-amino-2-methyl-5-(phosphooxymethyl)pyrimidine + CO + 5'-deoxyadenosine + formate + L-methionine + 3 H(+). Its pathway is cofactor biosynthesis; thiamine diphosphate biosynthesis. In terms of biological role, catalyzes the synthesis of the hydroxymethylpyrimidine phosphate (HMP-P) moiety of thiamine from aminoimidazole ribotide (AIR) in a radical S-adenosyl-L-methionine (SAM)-dependent reaction. The protein is Phosphomethylpyrimidine synthase of Bacillus thuringiensis (strain Al Hakam).